A 154-amino-acid polypeptide reads, in one-letter code: Large ribosomal subunit protein uL13 (154 aa).

It belongs to the universal ribosomal protein uL13 family. In terms of assembly, part of the 50S ribosomal subunit.

Its function is as follows. This protein is one of the early assembly proteins of the 50S ribosomal subunit, although it is not seen to bind rRNA by itself. It is important during the early stages of 50S assembly. In Brucella suis (strain ATCC 23445 / NCTC 10510), this protein is Large ribosomal subunit protein uL13.